Here is a 75-residue protein sequence, read N- to C-terminus: Protein SlyX homolog (75 aa).

Residues K56–Y75 are disordered.

The protein belongs to the SlyX family.

In Vibrio parahaemolyticus serotype O3:K6 (strain RIMD 2210633), this protein is Protein SlyX homolog.